The chain runs to 247 residues: Carboxy-S-adenosyl-L-methionine synthase (247 aa).

S-adenosyl-L-methionine-binding positions include Tyr39, 64–66 (GCS), 89–90 (DN), 117–118 (DI), Asn132, and Arg199.

This sequence belongs to the class I-like SAM-binding methyltransferase superfamily. Cx-SAM synthase family. In terms of assembly, homodimer.

It catalyses the reaction prephenate + S-adenosyl-L-methionine = carboxy-S-adenosyl-L-methionine + 3-phenylpyruvate + H2O. Catalyzes the conversion of S-adenosyl-L-methionine (SAM) to carboxy-S-adenosyl-L-methionine (Cx-SAM). This chain is Carboxy-S-adenosyl-L-methionine synthase, found in Salmonella choleraesuis (strain SC-B67).